The chain runs to 455 residues: Protein U54 (455 aa).

This sequence belongs to the herpesviridae UL82 family.

This chain is Protein U54 (U54), found in Homo sapiens (Human).